A 96-amino-acid chain; its full sequence is MAAVWREGDDLLLRLYIQPKASRDSIVGLHGEELKVAITAPPIDGKANAHLSKYLAKLCKVAKGSVVVEKGELGRHKQVRILQPSQIPAEIAALIE.

The protein belongs to the UPF0235 family.

The sequence is that of UPF0235 protein VCM66_0443 from Vibrio cholerae serotype O1 (strain M66-2).